We begin with the raw amino-acid sequence, 101 residues long: 2-amino-4-ketopentanoate thiolase alpha subunit (101 aa).

Belongs to the OrtA family. Heterodimer with OrtB.

It carries out the reaction D-alanine + acetyl-CoA = (2R)-2-amino-4-oxopentanoate + CoA. Its function is as follows. Involved in the ornithine fermentation pathway. Catalyzes the thiolytic cleavage of 2-amino-4-ketopentanoate (AKP) with coenzyme A (CoA) to form acetyl-CoA and alanine. It is strictly specific for AKP. In Unknown prokaryotic organism, this protein is 2-amino-4-ketopentanoate thiolase alpha subunit.